A 144-amino-acid chain; its full sequence is Large ribosomal subunit protein uL16 (144 aa).

Belongs to the universal ribosomal protein uL16 family. As to quaternary structure, part of the 50S ribosomal subunit.

Functionally, binds 23S rRNA and is also seen to make contacts with the A and possibly P site tRNAs. This Natranaerobius thermophilus (strain ATCC BAA-1301 / DSM 18059 / JW/NM-WN-LF) protein is Large ribosomal subunit protein uL16.